The chain runs to 770 residues: Protein PAT1 homolog 1 (770 aa).

Residues 1–26 (MFRYESLEDCPLDEDEDAFQGLGEED) form a disordered region. Residues 1 to 84 (MFRYESLEDC…EMDLLGDHEE (84 aa)) form a region A; interaction with DDX6/RCK region. The segment at 1-397 (MFRYESLEDC…HRSSHQDHLR (397 aa)) is involved in nuclear foci localization. The segment covering 7-26 (LEDCPLDEDEDAFQGLGEED) has biased composition (acidic residues). Residues 85 to 388 (NLAERLSKMV…LNGAGDRGSH (304 aa)) are region N; interaction with decapping machinery. The Nuclear export signal signature appears at 86–95 (LAERLSKMVI). Ser-177 is subject to Phosphoserine. Residue Thr-178 is modified to Phosphothreonine. Phosphoserine is present on residues Ser-179 and Ser-184. A Phosphothreonine modification is found at Thr-194. Arg-217, Arg-223, and Arg-263 each carry asymmetric dimethylarginine. The tract at residues 223-397 (RYPAPYGERM…HRSSHQDHLR (175 aa)) is involved in RNA-binding. At Ser-278 the chain carries Phosphoserine. Arg-284 is modified (asymmetric dimethylarginine). 2 disordered regions span residues 315 to 344 (FRAF…QNLR) and 360 to 400 (QHRR…RKDP). The span at 324–337 (SATPPPQQHPPGPG) shows a compositional bias: pro residues. Positions 367 to 380 (QRQQQNRNQHRNLN) are enriched in low complexity. Arg-385 bears the Omega-N-methylarginine mark. Residues 385 to 400 (RGSHRSSHQDHLRKDP) are compositionally biased toward basic and acidic residues. Residues 389-448 (RSSHQDHLRKDPYANLMLQREKDWVSKIQMMQLQSTDPYLDDFYYQNYFEKLEKLSAAEE) form a region H region. Positions 398–770 (KDPYANLMLQ…TKLQLVQGIR (373 aa)) are involved in nuclear speckle localization. The region C stretch occupies residues 449 to 770 (IQGDGPKKER…TKLQLVQGIR (322 aa)).

The protein belongs to the PAT1 family. As to quaternary structure, interacts (via region A) with DDX6/RCK. Interacts (via region H and region C) with LSM1 and LSM4. Interacts (via region N) with DCP1A, DCP2, EDC3, EDC4 and XRN1. Interacts with the CCR4-NOT complex. Interacts with the Lsm-containing SMN-Sm protein complex. Interacts with EIF4ENIF1/4E-T.

It is found in the cytoplasm. The protein localises to the P-body. The protein resides in the nucleus. Its subcellular location is the PML body. It localises to the nucleus speckle. Its function is as follows. RNA-binding protein involved in deadenylation-dependent decapping of mRNAs, leading to the degradation of mRNAs. Acts as a scaffold protein that connects deadenylation and decapping machinery. Required for cytoplasmic mRNA processing body (P-body) assembly. This is Protein PAT1 homolog 1 (PATL1) from Pongo abelii (Sumatran orangutan).